The sequence spans 140 residues: NADPH-dependent 7-cyano-7-deazaguanine reductase (140 aa).

The active-site Thioimide intermediate is C49. D56 serves as the catalytic Proton donor. Substrate-binding positions include 71–73 (IEL) and 90–91 (HE).

It belongs to the GTP cyclohydrolase I family. QueF type 1 subfamily.

The protein localises to the cytoplasm. The enzyme catalyses 7-aminomethyl-7-carbaguanine + 2 NADP(+) = 7-cyano-7-deazaguanine + 2 NADPH + 3 H(+). The protein operates within tRNA modification; tRNA-queuosine biosynthesis. Catalyzes the NADPH-dependent reduction of 7-cyano-7-deazaguanine (preQ0) to 7-aminomethyl-7-deazaguanine (preQ1). The chain is NADPH-dependent 7-cyano-7-deazaguanine reductase from Prochlorococcus marinus (strain NATL2A).